Consider the following 283-residue polypeptide: uncharacterized protein (283 aa).

Gly-2 carries N-myristoyl glycine; by host lipidation. 6 N-linked (GlcNAc...) asparagine; by host glycosylation sites follow: Asn-31, Asn-95, Asn-105, Asn-108, Asn-137, and Asn-147. The next 2 membrane-spanning stretches (helical) occupy residues 181–201 and 250–270; these read IIAA…VVYF and FIVL…LDIP. The N-linked (GlcNAc...) asparagine; by host glycan is linked to Asn-277.

The protein resides in the membrane. This is an uncharacterized protein from Acanthamoeba polyphaga (Amoeba).